The primary structure comprises 316 residues: Melanocyte-stimulating hormone receptor (316 aa).

The Extracellular segment spans residues 1–37 (MPMQGAQRKLLGSLNSTPTATSNLGLAANHTGAPCLE). Residue asparagine 29 is glycosylated (N-linked (GlcNAc...) asparagine). A helical membrane pass occupies residues 38–63 (VSIPDGLFLSLGLVSLVENMLVVAAI). The Cytoplasmic segment spans residues 64–72 (AKNRNLHSP). The helical transmembrane segment at 73–93 (MYCFICCLALSDLLVSGSNML) threads the bilayer. Residues 94–118 (ETAVVVLLEAGALATRASVVQQLHN) are Extracellular-facing. A helical transmembrane segment spans residues 119 to 140 (TIDVLTYSSMLCSLCFVGAIAV). The Cytoplasmic segment spans residues 141 to 163 (DRYISIFYALRYHSIMTLPRVQR). Residues 164 to 183 (VIAAIWVASVTSSTLFITYY) traverse the membrane as a helical segment. The Extracellular segment spans residues 184–191 (EHVVALLC). A helical membrane pass occupies residues 192–210 (LVVFLTMLVLMAVLYVHML). Residues 211-239 (ARACQHAQGITRLHKRQPPAHQGFGLRGA) lie on the Cytoplasmic side of the membrane. The helical transmembrane segment at 240–265 (ATLTILLGIFFLCWGPFFLHLTLVVF) threads the bilayer. Residues 266 to 278 (CPQHLTCSCIFKN) are Extracellular-facing. A helical membrane pass occupies residues 279–299 (FKVFLTLIICNTIIDPLIYAF). Residues 300–316 (RSQELCRTLKEVLLCSW) are Cytoplasmic-facing. Cysteine 314 carries the S-palmitoyl cysteine lipid modification.

Belongs to the G-protein coupled receptor 1 family. In terms of assembly, interacts with MGRN1, but does not undergo MGRN1-mediated ubiquitination; this interaction competes with GNAS-binding and thus inhibits agonist-induced cAMP production. Interacts with OPN3; the interaction results in a decrease in MC1R-mediated cAMP signaling and ultimately a decrease in melanin production in melanocytes.

It is found in the cell membrane. Functionally, receptor for MSH (alpha, beta and gamma) and ACTH. The activity of this receptor is mediated by G proteins which activate adenylate cyclase. Mediates melanogenesis, the production of eumelanin (black/brown) and phaeomelanin (red/yellow), via regulation of cAMP signaling in melanocytes. The protein is Melanocyte-stimulating hormone receptor (MC1R) of Cebus albifrons (White-fronted capuchin).